We begin with the raw amino-acid sequence, 205 residues long: FMN reductase (NADH) RutF (205 aa).

A disordered region spans residues 171–205; sequence PRAPRSGSAPAEPARAARALGARPAEGPALALRSA.

The protein belongs to the non-flavoprotein flavin reductase family. RutF subfamily.

It catalyses the reaction FMNH2 + NAD(+) = FMN + NADH + 2 H(+). Its function is as follows. Catalyzes the reduction of FMN to FMNH2 which is used to reduce pyrimidine by RutA via the Rut pathway. This is FMN reductase (NADH) RutF from Methylorubrum extorquens (strain DSM 6343 / CIP 106787 / DM4) (Methylobacterium extorquens).